The sequence spans 353 residues: Photosystem II protein D1 (353 aa).

T2 is modified (N-acetylthreonine). At T2 the chain carries Phosphothreonine. 3 helical membrane-spanning segments follow: residues 29 to 46, 118 to 133, and 142 to 156; these read YIGW…TATS, HFLL…EWEL, and WIAV…AATA. Chlorophyll a is bound at residue H118. Y126 serves as a coordination point for pheophytin a. Residues D170 and E189 each coordinate [CaMn4O5] cluster. A helical transmembrane segment spans residues 197–218; it reads FHMLGVAGVFGGSLFSAMHGSL. H198 is a chlorophyll a binding site. A quinone is bound by residues H215 and 264-265; that span reads SF. Residue H215 coordinates Fe cation. H272 contributes to the Fe cation binding site. The chain crosses the membrane as a helical span at residues 274–288; the sequence is FLAAWPVVGIWFTAL. The [CaMn4O5] cluster site is built by H332, E333, D342, and A344. Residues 345–353 constitute a propeptide that is removed on maturation; sequence AVESPSING.

It belongs to the reaction center PufL/M/PsbA/D family. As to quaternary structure, PSII is composed of 1 copy each of membrane proteins PsbA, PsbB, PsbC, PsbD, PsbE, PsbF, PsbH, PsbI, PsbJ, PsbK, PsbL, PsbM, PsbT, PsbX, PsbY, PsbZ, Psb30/Ycf12, at least 3 peripheral proteins of the oxygen-evolving complex and a large number of cofactors. It forms dimeric complexes. Requires The D1/D2 heterodimer binds P680, chlorophylls that are the primary electron donor of PSII, and subsequent electron acceptors. It shares a non-heme iron and each subunit binds pheophytin, quinone, additional chlorophylls, carotenoids and lipids. D1 provides most of the ligands for the Mn4-Ca-O5 cluster of the oxygen-evolving complex (OEC). There is also a Cl(-1) ion associated with D1 and D2, which is required for oxygen evolution. The PSII complex binds additional chlorophylls, carotenoids and specific lipids. as cofactor. Tyr-161 forms a radical intermediate that is referred to as redox-active TyrZ, YZ or Y-Z. Post-translationally, C-terminally processed by CTPA; processing is essential to allow assembly of the oxygen-evolving complex and thus photosynthetic growth.

Its subcellular location is the plastid. The protein resides in the chloroplast thylakoid membrane. It carries out the reaction 2 a plastoquinone + 4 hnu + 2 H2O = 2 a plastoquinol + O2. Photosystem II (PSII) is a light-driven water:plastoquinone oxidoreductase that uses light energy to abstract electrons from H(2)O, generating O(2) and a proton gradient subsequently used for ATP formation. It consists of a core antenna complex that captures photons, and an electron transfer chain that converts photonic excitation into a charge separation. The D1/D2 (PsbA/PsbD) reaction center heterodimer binds P680, the primary electron donor of PSII as well as several subsequent electron acceptors. This chain is Photosystem II protein D1, found in Sinapis alba (White mustard).